Here is a 216-residue protein sequence, read N- to C-terminus: 3-keto-L-gulonate-6-phosphate decarboxylase UlaD (216 aa).

A substrate-binding site is contributed by Asp11. 2 residues coordinate Mg(2+): Glu33 and Asp62. Arg192 is a binding site for substrate.

This sequence belongs to the HPS/KGPDC family. KGPDC subfamily. In terms of assembly, homodimer. The cofactor is Mg(2+).

The catalysed reaction is 3-dehydro-L-gulonate 6-phosphate + H(+) = L-xylulose 5-phosphate + CO2. The protein operates within cofactor degradation; L-ascorbate degradation; D-xylulose 5-phosphate from L-ascorbate: step 2/4. Its function is as follows. Catalyzes the decarboxylation of 3-keto-L-gulonate-6-P into L-xylulose-5-P. Is involved in the anaerobic L-ascorbate utilization. The polypeptide is 3-keto-L-gulonate-6-phosphate decarboxylase UlaD (Shigella boydii serotype 18 (strain CDC 3083-94 / BS512)).